The chain runs to 110 residues: Large ribosomal subunit protein P1 (110 aa).

A2 carries the blocked amino end (Ala) modification. The span at 69–83 shows a compositional bias: low complexity; the sequence is AAPAAGGAAAATEAP. Residues 69 to 110 form a disordered region; sequence AAPAAGGAAAATEAPAAKEEKKEEKKEESEEEDEDMGFGLFD. The segment covering 84–96 has biased composition (basic and acidic residues); it reads AAKEEKKEEKKEE. At S97 the chain carries Phosphoserine; in form eL12'-P.

Part of the ribosomal stalk of the large ribosomal subunit; P1 and P2 exist as dimers which assemble on the P0 scaffold. Post-translationally, phosphorylation of Ser-97 converts eL12' to eL12'-P.

Functionally, plays an important role in the elongation step of protein synthesis. The polypeptide is Large ribosomal subunit protein P1 (Artemia salina (Brine shrimp)).